Here is a 473-residue protein sequence, read N- to C-terminus: Lactate utilization protein B (473 aa).

4Fe-4S ferredoxin-type domains follow at residues 302 to 332 (GSEF…GHSY) and 351 to 380 (YDDY…LHDL). [4Fe-4S] cluster is bound by residues cysteine 311, cysteine 314, cysteine 317, cysteine 321, cysteine 364, cysteine 367, and cysteine 371.

The protein belongs to the LutB/YkgF family.

In terms of biological role, is involved in L-lactate degradation and allows cells to grow with lactate as the sole carbon source. Has probably a role as an electron transporter during oxidation of L-lactate. The polypeptide is Lactate utilization protein B (Bacillus cereus (strain G9842)).